Reading from the N-terminus, the 450-residue chain is Na(+)/H(+) antiporter NhaA (450 aa).

11 consecutive transmembrane segments (helical) span residues F24–V44, L75–I95, A111–L131, G140–G160, V169–F189, F196–G216, L224–A244, W318–A338, I352–V372, G390–F410, and S422–L442.

Belongs to the NhaA Na(+)/H(+) (TC 2.A.33) antiporter family.

The protein localises to the cell inner membrane. It carries out the reaction Na(+)(in) + 2 H(+)(out) = Na(+)(out) + 2 H(+)(in). Functionally, na(+)/H(+) antiporter that extrudes sodium in exchange for external protons. The sequence is that of Na(+)/H(+) antiporter NhaA from Oleidesulfovibrio alaskensis (strain ATCC BAA-1058 / DSM 17464 / G20) (Desulfovibrio alaskensis).